The following is a 35-amino-acid chain: Photosystem II reaction center protein T (35 aa).

A helical transmembrane segment spans residues 3–23 (ALVYTFLLVSTLGIIFFAIFF).

The protein belongs to the PsbT family. PSII is composed of 1 copy each of membrane proteins PsbA, PsbB, PsbC, PsbD, PsbE, PsbF, PsbH, PsbI, PsbJ, PsbK, PsbL, PsbM, PsbT, PsbY, PsbZ, Psb30/Ycf12, at least 3 peripheral proteins of the oxygen-evolving complex and a large number of cofactors. It forms dimeric complexes.

The protein resides in the plastid. It localises to the chloroplast thylakoid membrane. Functionally, found at the monomer-monomer interface of the photosystem II (PS II) dimer, plays a role in assembly and dimerization of PSII. PSII is a light-driven water plastoquinone oxidoreductase, using light energy to abstract electrons from H(2)O, generating a proton gradient subsequently used for ATP formation. In Ceratophyllum demersum (Rigid hornwort), this protein is Photosystem II reaction center protein T.